Reading from the N-terminus, the 996-residue chain is Alanine--tRNA ligase, chloroplastic/mitochondrial (996 aa).

The Zn(2+) site is built by histidine 677, histidine 681, cysteine 779, and histidine 783.

Belongs to the class-II aminoacyl-tRNA synthetase family. In terms of assembly, monomer. It depends on Zn(2+) as a cofactor.

Its subcellular location is the plastid. It is found in the chloroplast. The protein localises to the mitochondrion. The catalysed reaction is tRNA(Ala) + L-alanine + ATP = L-alanyl-tRNA(Ala) + AMP + diphosphate. In terms of biological role, catalyzes the attachment of alanine to tRNA(Ala) in a two-step reaction: alanine is first activated by ATP to form Ala-AMP and then transferred to the acceptor end of tRNA(Ala). Also edits incorrectly charged tRNA(Ala) via its editing domain. The polypeptide is Alanine--tRNA ligase, chloroplastic/mitochondrial (Oryza sativa subsp. indica (Rice)).